The sequence spans 309 residues: 2-oxoacid:ferredoxin oxidoreductase 2, subunit beta (309 aa).

Residues Cys17, Cys20, and Cys51 each coordinate [4Fe-4S] cluster. Residues 49 to 52 and His68 each bind thiamine diphosphate; that span reads IGCS. Asp93 contacts Mg(2+). 94–95 provides a ligand contact to thiamine diphosphate; sequence GD. Positions 121 and 123 each coordinate Mg(2+). 125–126 lines the thiamine diphosphate pocket; it reads GL. Cys200 contributes to the [4Fe-4S] cluster binding site.

As to quaternary structure, heterodimer composed of an alpha and a beta subunit. Requires [4Fe-4S] cluster as cofactor. The cofactor is thiamine diphosphate. Mg(2+) serves as cofactor.

The catalysed reaction is a 2-oxocarboxylate + 2 oxidized [2Fe-2S]-[ferredoxin] + CoA = an acyl-CoA + 2 reduced [2Fe-2S]-[ferredoxin] + CO2 + H(+). Catalyzes the coenzyme A-dependent oxidative decarboxylation of different 2-oxoacids such as pyruvate, 2-oxobutyrate, glyoxylate and 2-oxoglutarate to form their CoA derivatives. This Aeropyrum pernix (strain ATCC 700893 / DSM 11879 / JCM 9820 / NBRC 100138 / K1) protein is 2-oxoacid:ferredoxin oxidoreductase 2, subunit beta.